The primary structure comprises 212 residues: Ropporin-1 (212 aa).

In terms of domain architecture, RIIa spans P12 to A43. A Phosphoserine modification is found at S56. Positions V209–E212 are interaction with RHPN1.

Belongs to the ropporin family. In terms of assembly, homodimer. Interacts with AKAP3. May interact with SPA17. Interacts with RHPN1. Interacts with FSCB; the interaction increases upon spermatozoa capacitation conditions. Interacts with CFAP61. In terms of processing, sumoylated, sumoylation decreases upon spermatozoa capacitation conditions. As to expression, testis-specific. Present in the most inner parts of seminiferous tubules (at protein level).

The protein resides in the cell projection. The protein localises to the cilium. It localises to the flagellum. In terms of biological role, important for male fertility. With ROPN1L, involved in fibrous sheath integrity and sperm motility, plays a role in PKA-dependent signaling processes required for spermatozoa capacitation. This Mus musculus (Mouse) protein is Ropporin-1 (Ropn1).